A 66-amino-acid polypeptide reads, in one-letter code: Large ribosomal subunit protein bL35 (66 aa).

The segment at M1–H26 is disordered.

This sequence belongs to the bacterial ribosomal protein bL35 family.

This Bacillus anthracis protein is Large ribosomal subunit protein bL35.